A 156-amino-acid chain; its full sequence is Small ribosomal subunit protein uS7 (156 aa).

The protein belongs to the universal ribosomal protein uS7 family. As to quaternary structure, part of the 30S ribosomal subunit. Contacts proteins S9 and S11.

Its function is as follows. One of the primary rRNA binding proteins, it binds directly to 16S rRNA where it nucleates assembly of the head domain of the 30S subunit. Is located at the subunit interface close to the decoding center, probably blocks exit of the E-site tRNA. The polypeptide is Small ribosomal subunit protein uS7 (Carsonella ruddii (strain PV)).